The following is a 160-amino-acid chain: SsrA-binding protein (160 aa).

The protein belongs to the SmpB family.

It is found in the cytoplasm. Its function is as follows. Required for rescue of stalled ribosomes mediated by trans-translation. Binds to transfer-messenger RNA (tmRNA), required for stable association of tmRNA with ribosomes. tmRNA and SmpB together mimic tRNA shape, replacing the anticodon stem-loop with SmpB. tmRNA is encoded by the ssrA gene; the 2 termini fold to resemble tRNA(Ala) and it encodes a 'tag peptide', a short internal open reading frame. During trans-translation Ala-aminoacylated tmRNA acts like a tRNA, entering the A-site of stalled ribosomes, displacing the stalled mRNA. The ribosome then switches to translate the ORF on the tmRNA; the nascent peptide is terminated with the 'tag peptide' encoded by the tmRNA and targeted for degradation. The ribosome is freed to recommence translation, which seems to be the essential function of trans-translation. The protein is SsrA-binding protein of Haemophilus ducreyi (strain 35000HP / ATCC 700724).